The primary structure comprises 426 residues: Spermatogenesis-associated protein 2-like protein (426 aa).

4 disordered regions span residues 204-223 (AQDE…TYGA), 234-256 (DESS…PVEL), 269-300 (LWGS…EELE), and 316-347 (SRSG…ASSA). A phosphoserine mark is found at serine 318 and serine 326.

It belongs to the SPATA2 family.

The chain is Spermatogenesis-associated protein 2-like protein from Mus musculus (Mouse).